The chain runs to 242 residues: 1-(5-phosphoribosyl)-5-[(5-phosphoribosylamino)methylideneamino] imidazole-4-carboxamide isomerase (242 aa).

Asp8 acts as the Proton acceptor in catalysis. Asp130 acts as the Proton donor in catalysis.

It belongs to the HisA/HisF family.

The protein localises to the cytoplasm. It carries out the reaction 1-(5-phospho-beta-D-ribosyl)-5-[(5-phospho-beta-D-ribosylamino)methylideneamino]imidazole-4-carboxamide = 5-[(5-phospho-1-deoxy-D-ribulos-1-ylimino)methylamino]-1-(5-phospho-beta-D-ribosyl)imidazole-4-carboxamide. It participates in amino-acid biosynthesis; L-histidine biosynthesis; L-histidine from 5-phospho-alpha-D-ribose 1-diphosphate: step 4/9. The polypeptide is 1-(5-phosphoribosyl)-5-[(5-phosphoribosylamino)methylideneamino] imidazole-4-carboxamide isomerase (Acidithiobacillus ferrooxidans (strain ATCC 53993 / BNL-5-31) (Leptospirillum ferrooxidans (ATCC 53993))).